The primary structure comprises 162 residues: Dihydrofolate reductase (162 aa).

Residues Lys-3–Arg-161 enclose the DHFR domain. Ile-7–Ala-9 is a substrate binding site. Residues Ala-8–Ala-9 and Ile-16–Ala-21 each bind NADP(+). Asp-29 provides a ligand contact to substrate. Gly-45–Thr-48 is a binding site for NADP(+). Position 60 (Arg-60) interacts with substrate. NADP(+)-binding positions include Ile-65–Gln-68 and Met-98–Ile-103. Thr-117 serves as a coordination point for substrate.

The protein belongs to the dihydrofolate reductase family.

It catalyses the reaction (6S)-5,6,7,8-tetrahydrofolate + NADP(+) = 7,8-dihydrofolate + NADPH + H(+). It functions in the pathway cofactor biosynthesis; tetrahydrofolate biosynthesis; 5,6,7,8-tetrahydrofolate from 7,8-dihydrofolate: step 1/1. Its function is as follows. Key enzyme in folate metabolism. Catalyzes an essential reaction for de novo glycine and purine synthesis, and for DNA precursor synthesis. The polypeptide is Dihydrofolate reductase (folA) (Neisseria meningitidis serogroup A / serotype 4A (strain DSM 15465 / Z2491)).